Consider the following 469-residue polypeptide: Trigger factor (469 aa).

A PPIase FKBP-type domain is found at 165–250 (GDRVTIDYIG…VKAVCKSDEL (86 aa)). The span at 444-460 (DLTEKKPLKKKTAEKVS) shows a compositional bias: basic and acidic residues. The tract at residues 444 to 469 (DLTEKKPLKKKTAEKVSTKKKAPKKS) is disordered.

It belongs to the FKBP-type PPIase family. Tig subfamily.

The protein localises to the cytoplasm. It carries out the reaction [protein]-peptidylproline (omega=180) = [protein]-peptidylproline (omega=0). Functionally, involved in protein export. Acts as a chaperone by maintaining the newly synthesized protein in an open conformation. Functions as a peptidyl-prolyl cis-trans isomerase. The polypeptide is Trigger factor (Bartonella henselae (strain ATCC 49882 / DSM 28221 / CCUG 30454 / Houston 1) (Rochalimaea henselae)).